A 194-amino-acid polypeptide reads, in one-letter code: Peptidyl-tRNA hydrolase (194 aa).

Tyr-16 provides a ligand contact to tRNA. Residue His-21 is the Proton acceptor of the active site. Phe-67, Asn-69, and Asn-115 together coordinate tRNA.

This sequence belongs to the PTH family. Monomer.

Its subcellular location is the cytoplasm. It carries out the reaction an N-acyl-L-alpha-aminoacyl-tRNA + H2O = an N-acyl-L-amino acid + a tRNA + H(+). Functionally, hydrolyzes ribosome-free peptidyl-tRNAs (with 1 or more amino acids incorporated), which drop off the ribosome during protein synthesis, or as a result of ribosome stalling. Catalyzes the release of premature peptidyl moieties from peptidyl-tRNA molecules trapped in stalled 50S ribosomal subunits, and thus maintains levels of free tRNAs and 50S ribosomes. The chain is Peptidyl-tRNA hydrolase from Salmonella heidelberg (strain SL476).